The chain runs to 178 residues: Fatty-acid and retinol-binding protein 1 (178 aa).

Residues 1-16 (MYHQLILLALIGTIMA) form the signal peptide. Coiled coils occupy residues 67–89 (DAALEALKDKSDKLYKNAVELRN) and 129–154 (IKQAARDIIAKYQALNEETKEELKVT).

Belongs to the fatty-acid and retinol-binding protein (FARBP) family. Post-translationally, not glycosylated.

It is found in the secreted. In terms of biological role, binds retinol and different fatty acids. This Loa loa (Eye worm) protein is Fatty-acid and retinol-binding protein 1.